A 172-amino-acid chain; its full sequence is MDLKQYVSEVQDWPKPGVSFKDITTIMDNGEAYGYATDKIVEYAKDRDVDIVVGPEARGFIIGCPVAYSMGIGFAPVRKEGKLPREVIRYEYDLEYGTNVLTMHKDAIKPGQRVLITDDLLATGGTIEAAIKLVEKLGGIVVGIAFIIELKYLNGIEKIKDYDVMSLISYDE.

This sequence belongs to the purine/pyrimidine phosphoribosyltransferase family. In terms of assembly, homodimer.

The protein resides in the cytoplasm. It carries out the reaction AMP + diphosphate = 5-phospho-alpha-D-ribose 1-diphosphate + adenine. The protein operates within purine metabolism; AMP biosynthesis via salvage pathway; AMP from adenine: step 1/1. Its function is as follows. Catalyzes a salvage reaction resulting in the formation of AMP, that is energically less costly than de novo synthesis. The protein is Adenine phosphoribosyltransferase of Staphylococcus aureus (strain Mu3 / ATCC 700698).